A 115-amino-acid polypeptide reads, in one-letter code: NADH-ubiquinone oxidoreductase chain 3 (115 aa).

A run of 3 helical transmembrane segments spans residues 4–24 (LITM…AFWL), 55–75 (FFLV…LLPL), and 87–107 (TMMV…YEWL).

The protein belongs to the complex I subunit 3 family. Core subunit of respiratory chain NADH dehydrogenase (Complex I) which is composed of 45 different subunits. Interacts with TMEM186. Interacts with TMEM242.

It is found in the mitochondrion inner membrane. It catalyses the reaction a ubiquinone + NADH + 5 H(+)(in) = a ubiquinol + NAD(+) + 4 H(+)(out). In terms of biological role, core subunit of the mitochondrial membrane respiratory chain NADH dehydrogenase (Complex I) which catalyzes electron transfer from NADH through the respiratory chain, using ubiquinone as an electron acceptor. Essential for the catalytic activity of complex I. This Notiomys edwardsii (Edwards's long-clawed mouse) protein is NADH-ubiquinone oxidoreductase chain 3.